The following is a 736-amino-acid chain: MPRYKTVEQVLSLMKDRTRVRNIGIIAHVDHGKTTTSDTLLAASGIISPKVAGEALALDYLSVEQQRGITVKAANISLYHEAEGKGYVINLIDTPGHVDFSGRVTRSLRVLDGSIVVVDAVEGIMTQTETVLRQSLEERVRPILFINKVDRLVKELKLSPQEMLNRLLDIIRQVNNLIDMYGEPEFKEKWMINPQAGNVIFGSAKDKWGFSLPMAQKKGINMKNVIDAYTASDKSKLEELAAQAPINEALLDAAIKFVPNPIEAQKYRIPKIWKGDLDNELAKAMLNADPNGPIVFMITDMKVDPHAGLVATGRVFSGTLRSGEELWLVNAKTSQRILQVSLYMGPTRELAEEIPAGNIAAVLGLDRARSGETAISVGFSNVQGSFERLHYISEPVVTIAVEPKNPKDLTKMIDALRKLSIEDPNLVVKINEETGEYLLSGMGFLHLEVSLQLLRENYGIDVVTTPPIVVYRESIRAKSQVFEGKSPNKHNKFYLSVEPLNDKTIELISNGTIREDMDSKEMAKILRDEASWDYDEAKRIIAIDENVNVFVDLTSGVQHLREVMDTVLQGFRLAMKEGPLAHEPIRGVKVILHDAVIHEDPAHRGPAQIYPAVRNSIFAGFLTSRPTLLEPIQKLDIRVPADLIGNVTAVITRKRGKILDVSQIANMSRITAEIPVSESYDMASELRGSTGGRAFWGTEFSRWAPVPDSILLDVVTKIRERKGLPKELPKVEDFLS.

The 217-residue stretch at 18 to 234 (TRVRNIGIIA…VIDAYTASDK (217 aa)) folds into the tr-type G domain. GTP contacts are provided by residues 27–34 (AHVDHGKT), 93–97 (DTPGH), and 147–150 (NKVD). A Diphthamide modification is found at H603.

Belongs to the TRAFAC class translation factor GTPase superfamily. Classic translation factor GTPase family. EF-G/EF-2 subfamily.

The protein resides in the cytoplasm. Catalyzes the GTP-dependent ribosomal translocation step during translation elongation. During this step, the ribosome changes from the pre-translocational (PRE) to the post-translocational (POST) state as the newly formed A-site-bound peptidyl-tRNA and P-site-bound deacylated tRNA move to the P and E sites, respectively. Catalyzes the coordinated movement of the two tRNA molecules, the mRNA and conformational changes in the ribosome. The polypeptide is Elongation factor 2 (Saccharolobus islandicus (strain Y.N.15.51 / Yellowstone #2) (Sulfolobus islandicus)).